The primary structure comprises 72 residues: Antimicrobial peptide MeuNaTxbeta-4 (72 aa).

Positions 1–5 are cleaved as a signal peptide; that stretch reads LIGVK. Residues 7 to 69 enclose the LCN-type CS-alpha/beta domain; that stretch reads EHGYLLDKYT…LWHYETNKCN (63 aa). Cystine bridges form between Cys-18/Cys-68, Cys-22/Cys-43, Cys-29/Cys-50, and Cys-33/Cys-52.

As to expression, expressed by the venom gland.

The protein resides in the secreted. Antimicrobial peptide with weak activity against both Gram-positive and -negative bacteria. Its antibiotic activity is potentiated by other antibacterial peptides such as Meucin-49. The polypeptide is Antimicrobial peptide MeuNaTxbeta-4 (Mesobuthus eupeus (Lesser Asian scorpion)).